We begin with the raw amino-acid sequence, 151 residues long: 3-dehydroquinate dehydratase (151 aa).

Tyr24 (proton acceptor) is an active-site residue. Substrate is bound by residues Asn76, His82, and Asp89. Catalysis depends on His102, which acts as the Proton donor. Residues 103-104 and Arg113 each bind substrate; that span reads VS.

This sequence belongs to the type-II 3-dehydroquinase family. Homododecamer.

It catalyses the reaction 3-dehydroquinate = 3-dehydroshikimate + H2O. It participates in metabolic intermediate biosynthesis; chorismate biosynthesis; chorismate from D-erythrose 4-phosphate and phosphoenolpyruvate: step 3/7. In terms of biological role, catalyzes a trans-dehydration via an enolate intermediate. The sequence is that of 3-dehydroquinate dehydratase from Rhodopseudomonas palustris (strain TIE-1).